The following is a 406-amino-acid chain: Beta-galactoside alpha-2,6-sialyltransferase 1 (406 aa).

The Cytoplasmic portion of the chain corresponds to 1–9; that stretch reads MIHTNLKKK. The chain crosses the membrane as a helical; Signal-anchor for type II membrane protein span at residues 10–26; sequence FSCCVLVFLLFAVICVW. The Lumenal segment spans residues 27 to 406; that stretch reads KEKKKGSYYD…TLPGFRTIHC (380 aa). 3 cysteine pairs are disulfide-bonded: Cys142-Cys406, Cys184-Cys335, and Cys353-Cys364. N-linked (GlcNAc...) asparagine glycans are attached at residues Asn149 and Asn161. Residues Ser189, Asn212, Asn233, 322 to 324, Cys353, Tyr354, Thr365, Tyr369, His370, and Lys376 contribute to the substrate site; that span reads SSG. Tyr369 is modified (phosphotyrosine).

This sequence belongs to the glycosyltransferase 29 family. Monomer and homodimer. In terms of processing, N-glycosylated.

It localises to the golgi apparatus. The protein localises to the golgi stack membrane. The protein resides in the secreted. The enzyme catalyses a beta-D-galactoside + CMP-N-acetyl-beta-neuraminate = an N-acetyl-alpha-neuraminyl-(2-&gt;6)-beta-D-galactosyl derivative + CMP + H(+). It functions in the pathway protein modification; protein glycosylation. With respect to regulation, inhibited by CTP. Transfers sialic acid from CMP-sialic acid to galactose-containing acceptor substrates. In B lymphocytes, generates neuraminidase-sensitive lymphocyte cell-surface differentiation antigens, such as CDw75, HB-6 and CD76. This is Beta-galactoside alpha-2,6-sialyltransferase 1 (ST6GAL1) from Homo sapiens (Human).